The primary structure comprises 614 residues: Probable indole-3-acetic acid-amido synthetase GH3.2 (614 aa).

This sequence belongs to the IAA-amido conjugating enzyme family. Expressed in roots, flowers and callus.

May catalyze the synthesis of indole-3-acetic acid (IAA)-amino acid conjugates, providing a mechanism for the plant to cope with the presence of excess auxin. In Oryza sativa subsp. japonica (Rice), this protein is Probable indole-3-acetic acid-amido synthetase GH3.2 (GH3.2).